Consider the following 295-residue polypeptide: Glycine N-methyltransferase (295 aa).

(6S)-5-methyl-5,6,7,8-tetrahydrofolate contacts are provided by Ser-4 and Tyr-6. Residue Ser-10 is modified to Phosphoserine. S-adenosyl-L-methionine-binding residues include Tyr-22, Trp-31, Tyr-34, and Arg-41. A Phosphotyrosine modification is found at Tyr-34. At Lys-46 the chain carries N6-succinyllysine. S-adenosyl-L-methionine-binding positions include Ala-65, 86–88 (DAS), 117–118 (NW), 139–142 (LGNS), and Arg-178. N6-succinyllysine is present on residues Lys-193, Lys-198, and Lys-203. Residue His-217 coordinates (6S)-5-methyl-5,6,7,8-tetrahydrofolate. Tyr-223 is a binding site for S-adenosyl-L-methionine. Arg-242 lines the (6S)-5-methyl-5,6,7,8-tetrahydrofolate pocket.

Belongs to the class I-like SAM-binding methyltransferase superfamily. Glycine N-methyltransferase family. As to quaternary structure, homotetramer. As to expression, abundant in liver.

It localises to the cytoplasm. It carries out the reaction glycine + S-adenosyl-L-methionine = sarcosine + S-adenosyl-L-homocysteine + H(+). Inhibited by 5-methyltetrahydrofolate monoglutamate and by 5-methyltetrahydrofolate pentaglutamate, inhibition is much more effective by the pentaglutamate form than by the monoglutamate form. Two molecules of 5-methyltetrahydrofolate are bound per tetramer. The binding sites are localized between subunits. Inhibitor binding may preclude movements of the polypeptide chain that are necessary for enzyme activity. Its function is as follows. Catalyzes the methylation of glycine by using S-adenosylmethionine (AdoMet) to form N-methylglycine (sarcosine) with the concomitant production of S-adenosylhomocysteine (AdoHcy), a reaction regulated by the binding of 5-methyltetrahydrofolate. Plays an important role in the regulation of methyl group metabolism by regulating the ratio between S-adenosyl-L-methionine and S-adenosyl-L-homocysteine. The chain is Glycine N-methyltransferase (GNMT) from Oryctolagus cuniculus (Rabbit).